The sequence spans 368 residues: Glutamate 5-kinase (368 aa).

Position 13 (Lys-13) interacts with ATP. Substrate contacts are provided by Ser-54, Asp-141, and Asn-153. 173–174 (SD) is an ATP binding site. Residues 278–355 (RGEITVDAGA…AEIEAVLGYP (78 aa)) enclose the PUA domain.

Belongs to the glutamate 5-kinase family.

It localises to the cytoplasm. The catalysed reaction is L-glutamate + ATP = L-glutamyl 5-phosphate + ADP. Its pathway is amino-acid biosynthesis; L-proline biosynthesis; L-glutamate 5-semialdehyde from L-glutamate: step 1/2. Catalyzes the transfer of a phosphate group to glutamate to form L-glutamate 5-phosphate. This is Glutamate 5-kinase from Dinoroseobacter shibae (strain DSM 16493 / NCIMB 14021 / DFL 12).